We begin with the raw amino-acid sequence, 337 residues long: Junctional sarcoplasmic reticulum protein 1 (337 aa).

The mediates interaction with CACNA1S stretch occupies residues 1 to 84; the sequence is MATRAMEELD…EKEPVSKVTS (84 aa). Disordered regions lie at residues 23–125 and 159–337; these read SALA…ELPW and EAPA…KGRD. 2 stretches are compositionally biased toward basic and acidic residues: residues 49-59 and 69-79; these read SRSHDSQERVT and TKPKKMEKEPV. Low complexity predominate over residues 165 to 180; it reads PESWASSSSSPKGPAS. The segment covering 199-213 has biased composition (basic and acidic residues); that stretch reads SKLEERVQIPRSEEA. Residues 214 to 225 are compositionally biased toward acidic residues; it reads AEKDEWESEEAA. 3 stretches are compositionally biased toward basic and acidic residues: residues 236-277, 285-309, and 316-325; these read GPKE…RGAR, RRWE…DRKR, and RRPDEEDRPL. The segment covering 326–337 has biased composition (basic residues); it reads GRQKRRAGKGRD.

Interacts with CACNA1S, CACNB1 and calsequestrin.

The protein resides in the sarcoplasmic reticulum membrane. The protein localises to the endoplasmic reticulum membrane. Functionally, involved in skeletal muscle excitation/contraction coupling (EC), probably acting as a regulator of the voltage-sensitive calcium channel CACNA1S. EC is a physiological process whereby an electrical signal (depolarization of the plasma membrane) is converted into a chemical signal, a calcium gradient, by the opening of ryanodine receptor calcium release channels. May regulate CACNA1S membrane targeting and activity. The sequence is that of Junctional sarcoplasmic reticulum protein 1 (JSRP1) from Bos taurus (Bovine).